A 91-amino-acid chain; its full sequence is Translation initiation factor IF-1 (91 aa).

The region spanning 1 to 72 (MAKEELLEFE…DRGRINFRHK (72 aa)) is the S1-like domain. Positions 70–91 (RHKAEGNAPPPGARRQQNFRRR) are disordered.

Belongs to the IF-1 family. As to quaternary structure, component of the 30S ribosomal translation pre-initiation complex which assembles on the 30S ribosome in the order IF-2 and IF-3, IF-1 and N-formylmethionyl-tRNA(fMet); mRNA recruitment can occur at any time during PIC assembly.

It localises to the cytoplasm. One of the essential components for the initiation of protein synthesis. Stabilizes the binding of IF-2 and IF-3 on the 30S subunit to which N-formylmethionyl-tRNA(fMet) subsequently binds. Helps modulate mRNA selection, yielding the 30S pre-initiation complex (PIC). Upon addition of the 50S ribosomal subunit IF-1, IF-2 and IF-3 are released leaving the mature 70S translation initiation complex. The protein is Translation initiation factor IF-1 of Azorhizobium caulinodans (strain ATCC 43989 / DSM 5975 / JCM 20966 / LMG 6465 / NBRC 14845 / NCIMB 13405 / ORS 571).